The primary structure comprises 205 residues: Methylthioribulose-1-phosphate dehydratase (205 aa).

2 residues coordinate Zn(2+): histidine 95 and histidine 97.

The protein belongs to the aldolase class II family. MtnB subfamily. Zn(2+) serves as cofactor.

The enzyme catalyses 5-(methylsulfanyl)-D-ribulose 1-phosphate = 5-methylsulfanyl-2,3-dioxopentyl phosphate + H2O. It functions in the pathway amino-acid biosynthesis; L-methionine biosynthesis via salvage pathway; L-methionine from S-methyl-5-thio-alpha-D-ribose 1-phosphate: step 2/6. Catalyzes the dehydration of methylthioribulose-1-phosphate (MTRu-1-P) into 2,3-diketo-5-methylthiopentyl-1-phosphate (DK-MTP-1-P). In Microcystis aeruginosa (strain NIES-843 / IAM M-2473), this protein is Methylthioribulose-1-phosphate dehydratase.